The primary structure comprises 672 residues: MLRNGNKYLLMLVSIIMLTACISQSRTSFIPPQDRKSLLAEQPWPHNGFVAISWHNVEDEAADQRFMSVRTSALREQFAWLRENGYQPVSIAQIREAHRGGKPLPEKAVVLTFDDGYQSFYTRVFPILQAFQWPAVWAPVGSWVDTPADKQVKFGDELVDREYFATWQQVREVARSRLVELASHTWNSHYGIQANATGSLLPVYVNRAYFTDHARYETAAEYRERIRLDAVKMTEYLRTKVEVNPHVFIWPYGEANGIAIEELKKLGYDMFFTLESGLANASQLDSIPRVLIANNPSLKEFAQQIITVQEKSPQRIMHIDLDYVYDENLQQMDRNIDVLIQRVKDMQISTVYLQAFADPDGDGLVKEVWFPNRLLPMKADIFSRVAWQLRTRSGVNIYAWMPVLSWDLDPTLTRVKYLPTGEKKAQIHPEQYHRLSPFDDRVRAQVGMLYEDLAGHAAFDGILFHDDALLSDYEDASAPAITAYQQAGFSGSLSEIRQNPEQFKQWARFKSRALTDFTLELSARVKAIRGPHIKTARNIFALPVIQPESEAWFAQNYADFLKSYDWTAIMAMPYLEGVAEKSADQWLIQLTNQIKNIPQAKDKSILELQAQNWQKNGQHQAISSQQLAHWMSLLQLNGVKNYGYYPDNFLHNQPEIDLIRPEFSTAWYPKND.

The signal sequence occupies residues 1–20 (MLRNGNKYLLMLVSIIMLTA). C21 carries N-palmitoyl cysteine lipidation. C21 carries the S-diacylglycerol cysteine lipid modification. The NodB homology domain maps to 107–349 (KAVVLTFDDG…IQRVKDMQIS (243 aa)).

This sequence belongs to the polysaccharide deacetylase family.

It localises to the cell outer membrane. Functionally, catalyzes the N-deacetylation of poly-beta-1,6-N-acetyl-D-glucosamine (PGA), a biofilm adhesin polysaccharide. N-deacetylation promotes PGA export through the PgaA porin. This is Poly-beta-1,6-N-acetyl-D-glucosamine N-deacetylase (pgaB) from Escherichia coli O157:H7.